Consider the following 101-residue polypeptide: Small ribosomal subunit protein bS18c (101 aa).

A compositionally biased stretch (basic residues) spans 1 to 19 (MNKSKRPFTKSKRSFRRRL). The disordered stretch occupies residues 1–20 (MNKSKRPFTKSKRSFRRRLP).

The protein belongs to the bacterial ribosomal protein bS18 family. As to quaternary structure, part of the 30S ribosomal subunit.

The protein resides in the plastid. It is found in the chloroplast. The sequence is that of Small ribosomal subunit protein bS18c from Arabis hirsuta (Hairy rock-cress).